Consider the following 160-residue polypeptide: Crossover junction endodeoxyribonuclease RuvC (160 aa).

Residues Asp7, Glu67, and Asp138 contribute to the active site. Mg(2+) contacts are provided by Asp7, Glu67, and Asp138.

The protein belongs to the RuvC family. As to quaternary structure, homodimer which binds Holliday junction (HJ) DNA. The HJ becomes 2-fold symmetrical on binding to RuvC with unstacked arms; it has a different conformation from HJ DNA in complex with RuvA. In the full resolvosome a probable DNA-RuvA(4)-RuvB(12)-RuvC(2) complex forms which resolves the HJ. It depends on Mg(2+) as a cofactor.

It localises to the cytoplasm. It catalyses the reaction Endonucleolytic cleavage at a junction such as a reciprocal single-stranded crossover between two homologous DNA duplexes (Holliday junction).. In terms of biological role, the RuvA-RuvB-RuvC complex processes Holliday junction (HJ) DNA during genetic recombination and DNA repair. Endonuclease that resolves HJ intermediates. Cleaves cruciform DNA by making single-stranded nicks across the HJ at symmetrical positions within the homologous arms, yielding a 5'-phosphate and a 3'-hydroxyl group; requires a central core of homology in the junction. The consensus cleavage sequence is 5'-(A/T)TT(C/G)-3'. Cleavage occurs on the 3'-side of the TT dinucleotide at the point of strand exchange. HJ branch migration catalyzed by RuvA-RuvB allows RuvC to scan DNA until it finds its consensus sequence, where it cleaves and resolves the cruciform DNA. The protein is Crossover junction endodeoxyribonuclease RuvC of Brachyspira hyodysenteriae (strain ATCC 49526 / WA1).